Consider the following 201-residue polypeptide: MEIKKAAFVISNTDVRKCPDTRLPEYAFIGRSNVGKSSLINMLTGQKGLAMTSQKPGKTQLINHFIIDDSWYLVDLPGYGYARLGASNRESLRRIIETYILCREQLSSLFVLIDCRHEPQKIDLEFLQWLGENGIPFSIVFTKADKLSFSRLKENTEAYKQKLLETWEELPPVFITSSEKKTGKEELLDYIDSINQELATK.

An EngB-type G domain is found at 22 to 197 (RLPEYAFIGR…LDYIDSINQE (176 aa)). Residues 30–37 (GRSNVGKS), 57–61 (GKTQL), 75–78 (DLPG), 142–145 (TKAD), and 173–178 (VFITSS) each bind GTP. Residues S37 and T59 each coordinate Mg(2+).

The protein belongs to the TRAFAC class TrmE-Era-EngA-EngB-Septin-like GTPase superfamily. EngB GTPase family. Mg(2+) is required as a cofactor.

Functionally, necessary for normal cell division and for the maintenance of normal septation. This chain is Probable GTP-binding protein EngB, found in Porphyromonas gingivalis (strain ATCC 33277 / DSM 20709 / CIP 103683 / JCM 12257 / NCTC 11834 / 2561).